The primary structure comprises 353 residues: ATP-dependent kinase YFH7 (353 aa).

Residue 31 to 39 (GPPGSGKST) participates in ATP binding.

This sequence belongs to the YFH7 family.

ATP-dependent kinase that could be involved in endoplasmic reticulum membrane assembly. The sequence is that of ATP-dependent kinase YFH7 (YFH7) from Kluyveromyces lactis (strain ATCC 8585 / CBS 2359 / DSM 70799 / NBRC 1267 / NRRL Y-1140 / WM37) (Yeast).